A 770-amino-acid polypeptide reads, in one-letter code: Probable methyltransferase PMT24 (770 aa).

Topologically, residues 1-17 (MAMGKYSRVDGKKSSGY) are cytoplasmic. Residues 18–38 (GLTITIVLIVSLCLVGAWMFM) traverse the membrane as a helical; Signal-anchor for type II membrane protein segment. Residues 39 to 770 (SSWSAPTESI…EAETIQSAIA (732 aa)) lie on the Lumenal side of the membrane. Basic and acidic residues-rich tracts occupy residues 54–81 (ERTK…FPDE) and 93–164 (NEEK…KSED). Residues 54–223 (ERTKDVDTTK…STGSGAWSTQ (170 aa)) are disordered. Residues asparagine 160 and asparagine 166 are each glycosylated (N-linked (GlcNAc...) asparagine). The span at 212 to 223 (ESSTGSGAWSTQ) shows a compositional bias: polar residues. 2 N-linked (GlcNAc...) asparagine glycosylation sites follow: asparagine 244 and asparagine 363.

This sequence belongs to the methyltransferase superfamily.

It localises to the golgi apparatus membrane. The sequence is that of Probable methyltransferase PMT24 from Arabidopsis thaliana (Mouse-ear cress).